The sequence spans 444 residues: ATPase PAAT (444 aa).

S177, S182, and S254 each carry phosphoserine. Positions 279 to 300 are disordered; the sequence is SAQPSGEGNTTNHDEGHLMPQN. Residues 280-289 are compositionally biased toward polar residues; that stretch reads AQPSGEGNTT. S302 is subject to Phosphoserine. The disordered stretch occupies residues 424–444; the sequence is PPPGMPLRHYDSRERLSNGER. Residues 431–444 are compositionally biased toward basic and acidic residues; that stretch reads RHYDSRERLSNGER.

Homodimer. Interacts with ABCB7, ABCB8/MITOSUR and ABCB10.

The protein localises to the cytoplasm. Its subcellular location is the mitochondrion. It catalyses the reaction ATP + H2O = ADP + phosphate + H(+). Its function is as follows. ATPase that regulates mitochondrial ABC transporters ABCB7, ABCB8/MITOSUR and ABCB10. Regulates mitochondrial ferric concentration and heme biosynthesis and plays a role in the maintenance of mitochondrial homeostasis and cell survival. The sequence is that of ATPase PAAT from Mus musculus (Mouse).